Consider the following 754-residue polypeptide: FAD-dependent monooxygenase ntnA (754 aa).

The helical transmembrane segment at 3–23 (IPFKVLIIGGGVAGLTLAIML) threads the bilayer. Glu-34, Gly-48, and Arg-109 together coordinate FAD. Tyr-218 is an active-site residue. Asp-311 and Ala-324 together coordinate FAD. 4 helical membrane passes run 446-466 (PLAT…PWLA), 486-506 (AEVL…MWVI), 536-556 (ILPI…YYYM), and 563-583 (LGVA…SAVC). N-linked (GlcNAc...) asparagine glycosylation is present at Asn-586. The helical transmembrane segment at 595–615 (SWWFTADFAFPVVAYLSGMFL) threads the bilayer. Residue Asn-616 is glycosylated (N-linked (GlcNAc...) asparagine). 2 helical membrane passes run 644–664 (IAFV…TTIL) and 679–697 (LASL…AWEL). Asn-701 carries an N-linked (GlcNAc...) asparagine glycan. The helical transmembrane segment at 712–732 (LTILSSTIFGGPAATLAGTFI) threads the bilayer.

It belongs to the paxM FAD-dependent monooxygenase family. The cofactor is FAD.

The protein localises to the membrane. It functions in the pathway secondary metabolite biosynthesis; terpenoid biosynthesis. Its function is as follows. FAD-dependent monooxygenase; part of the gene cluster that mediates the biosynthesis of the meroterpenoids nectripenoids A and B, as well as cochliquninone D and isocochliquninone E. The pathway probably begins with the HR-PKS ntnH that catalyzes two chain-extension steps to form a reduced triketide, which then primes the SAT domain in the NR-PKS ntnG to initiate three more cycles of extension to give a linear hexaketide corresponding to the polyketide part of nectripenoids. The FAD-dependent monooxygenase ntnJ then performs an oxidative decarboxylation at C11 of the ntnH/ntnG product, via an electrophilic aromatic hydroxylation with concomitant ipso-decarboxylation. The membrane-bound polyprenyl transferase ntnF then introduces a farnesyl group before the FAD-dependent monooxygenase ntnK functions as the first epoxidase on terminal C12'-C13' olefin, followed by a second epoxidation on C7'-C8' catalyzed by ntnA. The terpene cyclase/mutase ntnI then initiates the sequential tricyclic ring formation through protonation of the terminal epoxide and catalyzes the regioselective and stereoselective 6/6/6-tricyclic ring formation. The cytochrome P450 monooxygenase ntnM may then hydroxylate C1'. The chain is FAD-dependent monooxygenase ntnA from Nectria sp.